Here is a 644-residue protein sequence, read N- to C-terminus: L-aspartate oxidase 2-a, chloroplastic (644 aa).

Residues 94-97 (SGIA), lysine 116, 123-130 (NTNYAQGG), and aspartate 294 contribute to the FAD site. The active-site Proton donor/acceptor is arginine 369. Residues glutamate 454 and 470 to 471 (SL) each bind FAD.

It belongs to the FAD-dependent oxidoreductase 2 family. NadB subfamily. FAD is required as a cofactor.

It is found in the plastid. The protein localises to the chloroplast. The enzyme catalyses L-aspartate + O2 = iminosuccinate + H2O2. The protein operates within alkaloid biosynthesis; nicotine biosynthesis. Its pathway is cofactor biosynthesis; NAD(+) biosynthesis; iminoaspartate from L-aspartate (oxidase route): step 1/1. In terms of biological role, involved in the biosynthesis of pyridine alkaloid natural products, leading mainly to the production of anabasine, anatabine, nicotine and nornicotine, effective deterrents against herbivores with antiparasitic and pesticide properties (neurotoxins); nornicotine serves as the precursor in the synthesis of the carcinogen compound N'-nitrosonornicotine (NNN). Catalyzes the oxidation of L-aspartate to iminoaspartate. This chain is L-aspartate oxidase 2-a, chloroplastic, found in Nicotiana tabacum (Common tobacco).